Reading from the N-terminus, the 357-residue chain is Membrane-bound lytic murein transglycosylase C (357 aa).

Residues 1–16 (MKKMLALLVIAPLLVS) form the signal peptide. A lipid anchor (N-palmitoyl cysteine) is attached at C17. C17 carries S-diacylglycerol cysteine lipidation.

It belongs to the transglycosylase Slt family.

It is found in the cell outer membrane. The enzyme catalyses Exolytic cleavage of the (1-&gt;4)-beta-glycosidic linkage between N-acetylmuramic acid (MurNAc) and N-acetylglucosamine (GlcNAc) residues in peptidoglycan, from either the reducing or the non-reducing ends of the peptidoglycan chains, with concomitant formation of a 1,6-anhydrobond in the MurNAc residue.. Functionally, murein-degrading enzyme. May play a role in recycling of muropeptides during cell elongation and/or cell division. The chain is Membrane-bound lytic murein transglycosylase C from Pectobacterium atrosepticum (strain SCRI 1043 / ATCC BAA-672) (Erwinia carotovora subsp. atroseptica).